Consider the following 124-residue polypeptide: Small ribosomal subunit protein uS12 (124 aa).

At D89 the chain carries 3-methylthioaspartic acid. Residues T104–K124 form a disordered region. The span at G111 to K124 shows a compositional bias: basic residues.

This sequence belongs to the universal ribosomal protein uS12 family. As to quaternary structure, part of the 30S ribosomal subunit. Contacts proteins S8 and S17. May interact with IF1 in the 30S initiation complex.

In terms of biological role, with S4 and S5 plays an important role in translational accuracy. Its function is as follows. Interacts with and stabilizes bases of the 16S rRNA that are involved in tRNA selection in the A site and with the mRNA backbone. Located at the interface of the 30S and 50S subunits, it traverses the body of the 30S subunit contacting proteins on the other side and probably holding the rRNA structure together. The combined cluster of proteins S8, S12 and S17 appears to hold together the shoulder and platform of the 30S subunit. This Micrococcus luteus (strain ATCC 4698 / DSM 20030 / JCM 1464 / CCM 169 / CCUG 5858 / IAM 1056 / NBRC 3333 / NCIMB 9278 / NCTC 2665 / VKM Ac-2230) (Micrococcus lysodeikticus) protein is Small ribosomal subunit protein uS12.